The chain runs to 577 residues: E3 ubiquitin-protein ligase MSL2 (577 aa).

A sufficient for interaction with MSL1 region spans residues 1-116 (MNPVNATALY…CEYITQTTLA (116 aa)). Zn(2+)-binding residues include cysteine 44, cysteine 47, cysteine 62, histidine 64, cysteine 67, cysteine 70, cysteine 81, and cysteine 84. The segment at 44 to 85 (CCVCGHLLQDPIAPTNSTCQHYVCKTCKGKKMMMKPSCSWCK) adopts an RING-type zinc-finger fold. A Glycyl lysine isopeptide (Lys-Gly) (interchain with G-Cter in SUMO2) cross-link involves residue lysine 375. The segment at 405–428 (TKSMKKSHEHGSKKSHSKSKPGIL) is disordered. Positions 407-423 (SMKKSHEHGSKKSHSKS) are enriched in basic residues. At serine 447 the chain carries Phosphoserine. The 52-residue stretch at 457 to 508 (QEKKGCKCGRATQNPSVLTCRGQRCPCYSNRKACLDCICRGCQNSYMANGEK) folds into the CXC MSL2-type domain. Zn(2+)-binding residues include cysteine 462, cysteine 464, cysteine 476, cysteine 481, cysteine 483, cysteine 490, cysteine 493, cysteine 495, and cysteine 498.

It belongs to the MSL2 family. As to quaternary structure, component of a multisubunit histone acetyltransferase complex (MSL) at least composed of the KAT8/MOF/MYST1, MSL1/hampin, MSL2 and MSL3. Forms a MSL heterotetrameric core with MSL1.

It is found in the nucleus. The protein localises to the chromosome. The catalysed reaction is S-ubiquitinyl-[E2 ubiquitin-conjugating enzyme]-L-cysteine + [acceptor protein]-L-lysine = [E2 ubiquitin-conjugating enzyme]-L-cysteine + N(6)-ubiquitinyl-[acceptor protein]-L-lysine.. It functions in the pathway protein modification; protein ubiquitination. In terms of biological role, non-catalytic component of the MSL histone acetyltransferase complex, a multiprotein complex that mediates the majority of histone H4 acetylation at 'Lys-16' (H4K16ac), an epigenetic mark that prevents chromatin compaction. The MSL complex is required for chromosome stability and genome integrity by maintaining homeostatic levels of H4K16ac. The MSL complex is also involved in gene dosage by promoting up-regulation of genes expressed by the X chromosome. X up-regulation is required to compensate for autosomal biallelic expression. The MSL complex also participates in gene dosage compensation by promoting expression of Tsix non-coding RNA. MSL2 plays a key role in gene dosage by ensuring biallelic expression of a subset of dosage-sensitive genes, including many haploinsufficient genes. Acts by promoting promoter-enhancer contacts, thereby preventing DNA methylation of one allele and creating a methylation-free environment for methylation-sensitive transcription factors such as SP1, KANSL1 and KANSL3. Also acts as an E3 ubiquitin ligase that promotes monoubiquitination of histone H2B at 'Lys-35' (H2BK34Ub), but not that of H2A. This activity is greatly enhanced by heterodimerization with MSL1. H2B ubiquitination in turn stimulates histone H3 methylation at 'Lys-4' (H3K4me) and 'Lys-79' (H3K79me) and leads to gene activation, including that of HOXA9 and MEIS1. The sequence is that of E3 ubiquitin-protein ligase MSL2 from Mus musculus (Mouse).